The following is a 339-amino-acid chain: Probable protein phosphatase 2C 28 (339 aa).

The PPM-type phosphatase domain occupies 87 to 334 (DHGYHLVKGQ…DDISCVVVSF (248 aa)). Mn(2+) contacts are provided by Asp124, Gly125, Asp286, and Asp325.

It belongs to the PP2C family. The cofactor is Mg(2+). Mn(2+) serves as cofactor.

It carries out the reaction O-phospho-L-seryl-[protein] + H2O = L-seryl-[protein] + phosphate. It catalyses the reaction O-phospho-L-threonyl-[protein] + H2O = L-threonyl-[protein] + phosphate. The chain is Probable protein phosphatase 2C 28 from Arabidopsis thaliana (Mouse-ear cress).